The chain runs to 120 residues: Late cornified envelope-like proline-rich protein 1 (120 aa).

This sequence belongs to the cornifin (SPRR) family.

The sequence is that of Late cornified envelope-like proline-rich protein 1 (Lelp1) from Mus musculus (Mouse).